The sequence spans 147 residues: Large ribosomal subunit protein uL11 (147 aa).

The protein belongs to the universal ribosomal protein uL11 family. Part of the ribosomal stalk of the 50S ribosomal subunit. Interacts with L10 and the large rRNA to form the base of the stalk. L10 forms an elongated spine to which L12 dimers bind in a sequential fashion forming a multimeric L10(L12)X complex. One or more lysine residues are methylated.

Its function is as follows. Forms part of the ribosomal stalk which helps the ribosome interact with GTP-bound translation factors. This Cytophaga hutchinsonii (strain ATCC 33406 / DSM 1761 / CIP 103989 / NBRC 15051 / NCIMB 9469 / D465) protein is Large ribosomal subunit protein uL11.